A 458-amino-acid polypeptide reads, in one-letter code: Monomethylamine methyltransferase MtmB3 (458 aa).

Pyl202 is a non-standard amino acid (pyrrolysine).

The protein belongs to the monomethylamine methyltransferase family.

The catalysed reaction is Co(I)-[methylamine-specific corrinoid protein] + methylamine + H(+) = methyl-Co(III)-[methylamine-specific corrinoid protein] + NH4(+). Its pathway is one-carbon metabolism; methanogenesis from methylamine. Functionally, catalyzes the transfer of the methyl group from monomethylamine to the corrinoid cofactor of MtmC. This Methanosarcina barkeri (strain Fusaro / DSM 804) protein is Monomethylamine methyltransferase MtmB3 (mtmB3).